The following is a 144-amino-acid chain: Large ribosomal subunit protein uL11 (144 aa).

This sequence belongs to the universal ribosomal protein uL11 family. In terms of assembly, part of the ribosomal stalk of the 50S ribosomal subunit. Interacts with L10 and the large rRNA to form the base of the stalk. L10 forms an elongated spine to which L12 dimers bind in a sequential fashion forming a multimeric L10(L12)X complex. Post-translationally, one or more lysine residues are methylated.

Its function is as follows. Forms part of the ribosomal stalk which helps the ribosome interact with GTP-bound translation factors. In Deinococcus deserti (strain DSM 17065 / CIP 109153 / LMG 22923 / VCD115), this protein is Large ribosomal subunit protein uL11.